Consider the following 196-residue polypeptide: Peptidyl-tRNA hydrolase (196 aa).

A tRNA-binding site is contributed by Tyr17. His22 (proton acceptor) is an active-site residue. TRNA-binding residues include Tyr69, Asn71, and Asn117.

This sequence belongs to the PTH family. As to quaternary structure, monomer.

Its subcellular location is the cytoplasm. It carries out the reaction an N-acyl-L-alpha-aminoacyl-tRNA + H2O = an N-acyl-L-amino acid + a tRNA + H(+). Hydrolyzes ribosome-free peptidyl-tRNAs (with 1 or more amino acids incorporated), which drop off the ribosome during protein synthesis, or as a result of ribosome stalling. In terms of biological role, catalyzes the release of premature peptidyl moieties from peptidyl-tRNA molecules trapped in stalled 50S ribosomal subunits, and thus maintains levels of free tRNAs and 50S ribosomes. This chain is Peptidyl-tRNA hydrolase, found in Pseudarthrobacter chlorophenolicus (strain ATCC 700700 / DSM 12829 / CIP 107037 / JCM 12360 / KCTC 9906 / NCIMB 13794 / A6) (Arthrobacter chlorophenolicus).